The chain runs to 212 residues: Outer-membrane lipoprotein carrier protein (212 aa).

A signal peptide spans 1–29; the sequence is MSSARRRALGFSFQALLLCAAGWHGAAQA.

It belongs to the LolA family. In terms of assembly, monomer.

It is found in the periplasm. Participates in the translocation of lipoproteins from the inner membrane to the outer membrane. Only forms a complex with a lipoprotein if the residue after the N-terminal Cys is not an aspartate (The Asp acts as a targeting signal to indicate that the lipoprotein should stay in the inner membrane). This Leptothrix cholodnii (strain ATCC 51168 / LMG 8142 / SP-6) (Leptothrix discophora (strain SP-6)) protein is Outer-membrane lipoprotein carrier protein.